A 60-amino-acid polypeptide reads, in one-letter code: MAVQQNKKSPSKRGMHRSHNALTVPGIAVEPTTGETHLRHHISPNGFYRGRQVLKNKSEA.

The tract at residues 1–60 (MAVQQNKKSPSKRGMHRSHNALTVPGIAVEPTTGETHLRHHISPNGFYRGRQVLKNKSEA) is disordered. Basic residues predominate over residues 9 to 19 (SPSKRGMHRSH).

Belongs to the bacterial ribosomal protein bL32 family.

This Paracidovorax citrulli (strain AAC00-1) (Acidovorax citrulli) protein is Large ribosomal subunit protein bL32.